Reading from the N-terminus, the 479-residue chain is Catalase A (479 aa).

Residue His63 is part of the active site. A heme-binding site is contributed by Tyr346.

The protein belongs to the catalase family. Heme serves as cofactor.

The protein resides in the peroxisome matrix. The catalysed reaction is 2 H2O2 = O2 + 2 H2O. Functionally, catalyzes the degradation of hydrogen peroxide (H(2)O(2)) generated by peroxisomal oxidases to water and oxygen, thereby protecting cells from the toxic effects of hydrogen peroxide. The sequence is that of Catalase A (catA) from Botryotinia fuckeliana (Noble rot fungus).